We begin with the raw amino-acid sequence, 1710 residues long: Phosphatidylinositol 4-phosphate 5-kinase (1710 aa).

The 31-residue stretch at 68–98 folds into the EF-hand domain; that stretch reads YKSIFKAFDLNNDNYLDFYEFCVAINIMLKG. The Ca(2+) site is built by aspartate 76, asparagine 78, aspartate 80, tyrosine 82, and glutamate 87. 3 disordered regions span residues 139-255, 427-479, and 895-993; these read NNMN…DPIN, KQKK…IKSV, and GEGH…HNNN. Positions 140 to 235 are enriched in low complexity; that stretch reads NMNGDNINGD…HNNNSHNNNN (96 aa). Polar residues predominate over residues 236–248; it reads KAENSLGQPLNEK. A compositionally biased stretch (basic residues) spans 427-444; that stretch reads KQKKKKKKKKKKKKKKEK. The span at 456–468 shows a compositional bias: low complexity; sequence SSSMENKSQNKSQ. The segment covering 902-973 has biased composition (acidic residues); it reads EEEEKNDDEE…DDNDDNDDND (72 aa). Over residues 974–987 the composition is skewed to basic and acidic residues; it reads EKSNIKIENKKDVP. The region spanning 1334 to 1709 is the PIPK domain; sequence QKKTFHRILA…RFVTFIENHM (376 aa).

The catalysed reaction is a 1,2-diacyl-sn-glycero-3-phospho-(1D-myo-inositol 4-phosphate) + ATP = a 1,2-diacyl-sn-glycero-3-phospho-(1D-myo-inositol-4,5-bisphosphate) + ADP + H(+). Its activity is regulated as follows. Catalytic activity is increase by myristoylated ARF1. Phosphatidic acid has no effect on catalytic activity. Catalyzes the phosphorylation of phosphatidylinositol 4-phosphate (PtdIns(4)P/PI4P) to form phosphatidylinositol 4,5-bisphosphate (PtdIns(4,5)P2/PIP2), a lipid second messenger that regulates several cellular processes. This chain is Phosphatidylinositol 4-phosphate 5-kinase, found in Plasmodium falciparum (isolate 3D7).